We begin with the raw amino-acid sequence, 464 residues long: MAVYNYDVVVLGSGPAGEGAAMNAAKAGRKVAMVDDRRQVGGNCTHLGTIPSKALRHSVRQIMQFNTNPMFRAIGEPRWFSFPDVLKSAEKVISKQVASRTGYYARNRVDVFFGTGSFADEQTVEVVCPNGVVEKLNAKHIIIATGSRPYRPADIDFHHPRVYDSDTILSLSHTPRKLIVYGAGVIGCEYASIFSGLGVLVELVDNRGQLLSFLDSEISQALSYHFSNNNITVRHNEEYERVEGLDNGVILHLKSGKKIKADALLWCNGRTGNTDKLGLENIGIKVNSRGQIEVDEAYRTTVPNIYGAGDVIGWPSLASAAHDQGRSAAGSIVDNGSWRFVNDVPTGIYTIPEISSIGKNEQELTQAKVPYEVGKAFFKGMARAQIAGEPQGMLKILFHRETLEILGVHCFGYQASEIVHIGQAIMNQPGEHNNLKYFVNTTFNYPTMAEAYRVAAYDGLNRLF.

Residue 35–44 (DDRRQVGGNC) coordinates FAD.

The protein belongs to the class-I pyridine nucleotide-disulfide oxidoreductase family. It depends on FAD as a cofactor.

Its subcellular location is the cytoplasm. The catalysed reaction is NAD(+) + NADPH = NADH + NADP(+). Functionally, conversion of NADPH, generated by peripheral catabolic pathways, to NADH, which can enter the respiratory chain for energy generation. The protein is Soluble pyridine nucleotide transhydrogenase of Pseudomonas putida (strain GB-1).